The chain runs to 107 residues: Large ribosomal subunit protein bL21 (107 aa).

The protein belongs to the bacterial ribosomal protein bL21 family. In terms of assembly, part of the 50S ribosomal subunit. Contacts protein L20.

This protein binds to 23S rRNA in the presence of protein L20. The chain is Large ribosomal subunit protein bL21 from Pseudothermotoga lettingae (strain ATCC BAA-301 / DSM 14385 / NBRC 107922 / TMO) (Thermotoga lettingae).